The primary structure comprises 970 residues: ATP-dependent DNA helicase DDX11 (970 aa).

Residues 9–445 enclose the Helicase ATP-binding domain; that stretch reads GAIHFPFPFT…KNLMYLKQIL (437 aa). 44 to 51 is an ATP binding site; it reads SPTGTGKS. S262 carries the post-translational modification Phosphoserine. [4Fe-4S] cluster is bound by residues C267 and C285. A compositionally biased stretch (basic and acidic residues) spans 289-304; it reads QRSRHEKKKGAEEEKP. The segment at 289 to 312 is disordered; that stretch reads QRSRHEKKKGAEEEKPKRRRQEKQ. Positions 315 and 350 each coordinate [4Fe-4S] cluster. Residues 393 to 396 carry the DEAH box motif; it reads DEAH. Residues 818-849 are disordered; that stretch reads TLSPRPGTPREGSGGEPVHEGRQPVHRQGHQA.

The protein belongs to the DEAD box helicase family. DEAH subfamily. DDX11/CHL1 sub-subfamily. In terms of assembly, associates with the CTF18-RFC complex. Associates with a cohesin complex composed of RAD21, SMC1 proteins and SMC3. Interacts with CHTF18. Interacts with DSCC1. Interacts with FEN1; this interaction is direct and increases flap endonuclease activity of FEN1. Interacts with PCNA. Interacts with POLR1A and UBTF. Interacts with RAD21, SMC1 proteins and SMC3. Interacts with RFC2. Interacts with TIMELESS; this interaction increases recruitment of both proteins onto chromatin in response to replication stress induction by hydroxyurea. As to quaternary structure, (Microbial infection) Interacts with bovine papillomavirus type 1 regulatory protein E2; this interaction stimulates the recruitment of E2 onto mitotic chromosomes. It depends on Mg(2+) as a cofactor. [4Fe-4S] cluster is required as a cofactor. In terms of tissue distribution, expressed in melanoma cells. Not detected in epidermal melanocytes of normal skin (at protein level). Highly expressed in spleen, B-cells, thymus, testis, ovary, small intestine and pancreas. Very low expression seen in brain. Expressed in dividing cells and/or cells undergoing high levels of recombination. No expression detected in cells signaled to terminally differentiate. Expressed weakly in keratinocytes.

The protein localises to the nucleus. It localises to the nucleolus. It is found in the cytoplasm. The protein resides in the cytoskeleton. Its subcellular location is the spindle pole. The protein localises to the midbody. It localises to the microtubule organizing center. It is found in the centrosome. The protein resides in the chromosome. The catalysed reaction is Couples ATP hydrolysis with the unwinding of duplex DNA at the replication fork by translocating in the 5'-3' direction. This creates two antiparallel DNA single strands (ssDNA). The leading ssDNA polymer is the template for DNA polymerase III holoenzyme which synthesizes a continuous strand.. It carries out the reaction ATP + H2O = ADP + phosphate + H(+). ATPase activity is stimulated by high magnesium salt levels (up to a 0.1 M), and potassium salts (glutamate, chloride or acetate) are more effective than the corresponding sodium salts. ATPase activity is enhanced by the long non-coding RNA (lncRNA) cohesion regulator noncoding RNA (CONCR). Double-stranded DNA helicase activity is maximal with magnesium ions at low concentrations (0.5-1 mM) whereas is markedly inhibited at higher levels (5 mM and above). Double-stranded DNA helicase activity is stimulated by 25-50 mM potassium acetate, stimulated to a lesser extent by 25 mM of ammonium acetate, and markedly inhibited by sodium acetate. In terms of biological role, DNA-dependent ATPase and ATP-dependent DNA helicase that participates in various functions in genomic stability, including DNA replication, DNA repair and heterochromatin organization as well as in ribosomal RNA synthesis. Its double-stranded DNA helicase activity requires either a minimal 5'-single-stranded tail length of approximately 15 nt (flap substrates) or 10 nt length single-stranded gapped DNA substrates of a partial duplex DNA structure for helicase loading and translocation along DNA in a 5' to 3' direction. The helicase activity is capable of displacing duplex regions up to 100 bp, which can be extended up to 500 bp by the replication protein A (RPA) or the cohesion CTF18-replication factor C (Ctf18-RFC) complex activities. Also shows ATPase- and helicase activities on substrates that mimic key DNA intermediates of replication, repair and homologous recombination reactions, including forked duplex, anti-parallel G-quadruplex and three-stranded D-loop DNA molecules. Plays a role in DNA double-strand break (DSB) repair at the DNA replication fork during DNA replication recovery from DNA damage. Recruited with TIMELESS factor upon DNA-replication stress response at DNA replication fork to preserve replication fork progression, and hence ensure DNA replication fidelity. Also cooperates with TIMELESS factor during DNA replication to regulate proper sister chromatid cohesion and mitotic chromosome segregation. Stimulates 5'-single-stranded DNA flap endonuclease activity of FEN1 in an ATP- and helicase-independent manner; and hence it may contribute in Okazaki fragment processing at DNA replication fork during lagging strand DNA synthesis. Its ability to function at DNA replication fork is modulated by its binding to long non-coding RNA (lncRNA) cohesion regulator non-coding RNA DDX11-AS1/CONCR, which is able to increase both DDX11 ATPase activity and binding to DNA replicating regions. Also plays a role in heterochromatin organization. Involved in rRNA transcription activation through binding to active hypomethylated rDNA gene loci by recruiting UBTF and the RNA polymerase Pol I transcriptional machinery. Plays a role in embryonic development and prevention of aneuploidy. Involved in melanoma cell proliferation and survival. Associates with chromatin at DNA replication fork regions. Binds to single- and double-stranded DNAs. Its function is as follows. (Microbial infection) Required for bovine papillomavirus type 1 regulatory protein E2 loading onto mitotic chromosomes during DNA replication for the viral genome to be maintained and segregated. In Homo sapiens (Human), this protein is ATP-dependent DNA helicase DDX11.